The primary structure comprises 4998 residues: SCO-spondin (4998 aa).

Positions 1-17 (MLPLALLFGMLWTQANG) are cleaved as a signal peptide. Positions 18–102 (HWCEQIETVH…ACCPGWGGAH (85 aa)) constitute an EMI domain. Positions 72–241 (GLCAIYKPPE…KLPGSEPGCL (170 aa)) constitute a VWFD 1 domain. 2 disulfides stabilise this stretch: Cys74–Cys202 and Cys103–Cys240. Asn88 and Asn130 each carry an N-linked (GlcNAc...) asparagine glycan. One can recognise a TIL 1 domain in the interval 349 to 404 (CPGGQLYSDCVSSCPPSCSAVAQGEEGSCGKECVSGCECPTGLFWDGALCVPAAHC). One can recognise a VWFC 1 domain in the interval 404 to 496 (CPCYHRRQRY…HGACDTGSCL (93 aa)). One can recognise a VWFD 2 domain in the interval 442 to 615 (AECAVGGDGH…FQVSGDGRCP (174 aa)). 2 cysteine pairs are disulfide-bonded: Cys444/Cys577 and Cys468/Cys614. N-linked (GlcNAc...) asparagine glycosylation is found at Asn534 and Asn698. In terms of domain architecture, TIL 2 spans 706 to 759 (CPGGQVYQECAPVCGHHCGEPEDCKELGICVAGCNCPPGLLWDLEGQCVPPSMC). N-linked (GlcNAc...) asparagine glycans are attached at residues Asn771, Asn790, Asn824, and Asn866. The region spanning 892 to 1062 (GWCQASGAPH…HSWRLNPLCP (171 aa)) is the VWFD 3 domain. Cystine bridges form between Cys894-Cys1026, Cys916-Cys1061, and Cys937-Cys944. In terms of domain architecture, TIL 3 spans 1153–1209 (CEGGQVYEPCGSTCPPTCHDHHSELRWHCQVITCVEGCFCPEGTLLHGGACMKLAAC). A glycan (N-linked (GlcNAc...) asparagine) is linked at Asn1230. 4 LDL-receptor class A domains span residues 1253 to 1290 (GCAE…EGCA), 1293 to 1328 (VCGE…EQGC), 1329 to 1365 (LCPH…ESCL), and 1369 to 1407 (SCIS…SHCS). 12 disulfides stabilise this stretch: Cys1254-Cys1267, Cys1261-Cys1280, Cys1274-Cys1289, Cys1294-Cys1306, Cys1301-Cys1319, Cys1313-Cys1328, Cys1330-Cys1342, Cys1337-Cys1355, Cys1349-Cys1364, Cys1370-Cys1382, Cys1377-Cys1395, and Cys1389-Cys1406. The disordered stretch occupies residues 1406-1440 (CSLPSLPTPPGGIGQNPSTSSLDTAPSPVGSTSPA). Polar residues predominate over residues 1420 to 1440 (QNPSTSSLDTAPSPVGSTSPA). 2 LDL-receptor class A domains span residues 1442-1478 (PCSL…LDCG) and 1480-1519 (PCML…DVCE). Intrachain disulfides connect Cys1443-Cys1455, Cys1450-Cys1468, Cys1462-Cys1477, Cys1481-Cys1494, Cys1488-Cys1507, and Cys1501-Cys1518. Asn1528 carries N-linked (GlcNAc...) asparagine glycosylation. Positions 1533-1571 (PCPEFSCPDGTCIDFLLVCDGNPDCELADETEPSLDEQG) constitute an LDL-receptor class A 7 domain. 9 cysteine pairs are disulfide-bonded: Cys1534/Cys1544, Cys1539/Cys1557, Cys1551/Cys1572, Cys1584/Cys1620, Cys1588/Cys1625, Cys1599/Cys1610, Cys1640/Cys1680, Cys1644/Cys1685, and Cys1654/Cys1664. TSP type-1 domains lie at 1572–1626 (CGAW…EACP) and 1628–1686 (DGEW…EGCL). Asn1598 carries N-linked (GlcNAc...) asparagine glycosylation. A glycan (N-linked (GlcNAc...) asparagine) is linked at Asn1687. The TIL 4 domain maps to 1692 to 1746 (GELVFRTCAPCPLTCDDISGQAACPPDRPCSSPGCWCPDGKVLNTEGQCVRPRQC). 2 consecutive EGF-like domains span residues 1702–1741 (CPLT…GQCV) and 1742–1768 (RPRQ…CQLC). The 57-residue stretch at 1771–1827 (DCGWSSWSPWAECLGPCSSQSLQWSFRSPNNPRLSGHGRQCRGIHRKARRCQTEACE) folds into the TSP type-1 3 domain. Disulfide bonds link Cys1772–Cys1811, Cys1783–Cys1787, and Cys1821–Cys1826. In terms of domain architecture, VWFC 2 spans 1827–1887 (EGCEQWGLMY…GMGESCCHCA (61 aa)). N-linked (GlcNAc...) asparagine glycosylation is found at Asn1892 and Asn1989. Residues 1929 to 2085 (CYSPLGLAGL…IFLWVELLGL (157 aa)) enclose the F5/8 type C domain. An LDL-receptor class A 8 domain is found at 2091–2127 (LCPGSRHRCASGECAPKGGPCDGAVDCDDGSDEEGCG). Intrachain disulfides connect Cys2092–Cys2104, Cys2099–Cys2117, and Cys2111–Cys2126. Residues 2119-2209 (DGSDEEGCGS…TFPPGAKSLH (91 aa)) are disordered. A compositionally biased stretch (polar residues) spans 2130–2144 (HASTTSRTPALSPTQ). Positions 2148–2158 (FPREVSEDLRQ) are enriched in basic and acidic residues. Polar residues-rich tracts occupy residues 2164–2173 (TSHSPPSSGE) and 2190–2201 (QPMQTLSATSTF). 2 consecutive LDL-receptor class A domains span residues 2242–2278 (PCGP…QHCA) and 2299–2335 (LCSP…DNCV). Intrachain disulfides connect Cys2243–Cys2255, Cys2250–Cys2268, Cys2262–Cys2277, Cys2300–Cys2312, Cys2307–Cys2325, Cys2319–Cys2334, Cys2337–Cys2373, Cys2348–Cys2352, Cys2383–Cys2388, Cys2403–Cys2440, Cys2407–Cys2445, and Cys2418–Cys2430. 2 consecutive TSP type-1 domains span residues 2336-2389 (DCVL…QACP) and 2391-2446 (AGAW…QLCP). The TIL 5 domain occupies 2468–2511 (VPPCPPSCLDPEANRSCSGHCMEGCRCPPGLLLQDSHCLPLSEC). N-linked (GlcNAc...) asparagine glycosylation is found at Asn2481 and Asn2530. TSP type-1 domains lie at 2551–2605 (SCGW…TDCG), 2609–2664 (PGWT…PVCP), and 2666–2719 (PSAW…HPCT). 9 disulfide bridges follow: Cys2552/Cys2590, Cys2563/Cys2567, Cys2600/Cys2604, Cys2620/Cys2658, Cys2624/Cys2663, Cys2640/Cys2648, Cys2678/Cys2713, Cys2682/Cys2718, and Cys2693/Cys2703. Asn2772 and Asn2802 each carry an N-linked (GlcNAc...) asparagine glycan. TSP type-1 domains lie at 2820-2875 (ACGW…RPCR) and 2876-2919 (GPGA…QPCA). Cystine bridges form between Cys2821–Cys2859, Cys2832–Cys2836, and Cys2869–Cys2874. 4 N-linked (GlcNAc...) asparagine glycosylation sites follow: Asn2897, Asn2952, Asn2999, and Asn3009. Positions 2926–2978 (CPEDQQWLDCAQGPASCAHLSIPGEANQTCHPGCYCLSGMLLLNNVCVPVQDC) constitute a TIL 6 domain. TSP type-1 domains lie at 3019–3086 (QPAW…PGCN) and 3088–3143 (AGGW…QPCP). Cystine bridges form between Cys3031/Cys3080, Cys3035/Cys3085, Cys3046/Cys3070, Cys3100/Cys3137, Cys3104/Cys3142, and Cys3115/Cys3127. N-linked (GlcNAc...) asparagine glycosylation occurs at Asn3146. A TIL 7 domain is found at 3151–3201 (EGAEYSPCGPPCPRSCDDLVHCVWRCQPGCYCPLGKVLSADGAICVKPSYC). Asn3235 is a glycosylation site (N-linked (GlcNAc...) asparagine). 2 consecutive TSP type-1 domains span residues 3244–3306 (SGDW…TACP) and 3308–3363 (DGAW…TLCT). 6 disulfides stabilise this stretch: Cys3256–Cys3299, Cys3260–Cys3305, Cys3271–Cys3283, Cys3320–Cys3355, Cys3323–Cys3362, and Cys3333–Cys3345. N-linked (GlcNAc...) asparagine glycosylation is present at Asn3301. Asn3357 carries an N-linked (GlcNAc...) asparagine glycan. Residues 3365–3421 (CGGGQDLLPCGQPCPHSCQDLSLGSTCQPGSAGCQSGCGCPPGQLSQDGLCVFPVDC) enclose the TIL 8 domain. Residues Asn3435 and Asn3462 are each glycosylated (N-linked (GlcNAc...) asparagine). The region spanning 3481-3529 (PGIWSSWGPWEKCSVSCGGGEQLRSRQCARPPCPGLAQQSRICHIHVCR) is the TSP type-1 15 domain. Intrachain disulfides connect Cys3493-Cys3523, Cys3497-Cys3528, and Cys3508-Cys3513. An N-linked (GlcNAc...) asparagine glycan is attached at Asn3638. TSP type-1 domains lie at 3657-3713 (HGSF…PECP), 3727-3779 (AGGW…PSCA), 3793-3849 (NCFW…RACP), and 3851-3906 (PGGW…MPCE). Intrachain disulfides connect Cys3669–Cys3707, Cys3673–Cys3712, and Cys3685–Cys3697. The N-linked (GlcNAc...) asparagine glycan is linked to Asn3761. 6 cysteine pairs are disulfide-bonded: Cys3794-Cys3830, Cys3805-Cys3809, Cys3843-Cys3848, Cys3863-Cys3900, Cys3867-Cys3905, and Cys3878-Cys3890. The TIL 9 domain occupies 3909–3964 (CPAGMEMVSCANHCPYSCSDLQEGGMCQEDQACQLGCRCSEGFLEQDGGCVPVGHC). Residue Asn3986 is glycosylated (N-linked (GlcNAc...) asparagine). 4 consecutive TSP type-1 domains span residues 4006 to 4059 (HCAW…VPCP), 4100 to 4155 (PRGW…QLCL), 4157 to 4213 (KLER…GPCQ), and 4215 to 4269 (DCTW…GNCS). Cystine bridges form between Cys4007-Cys4043, Cys4018-Cys4022, Cys4053-Cys4058, Cys4112-Cys4149, Cys4116-Cys4154, Cys4127-Cys4139, Cys4169-Cys4207, Cys4173-Cys4212, Cys4184-Cys4195, Cys4216-Cys4253, Cys4227-Cys4229, and Cys4263-Cys4268. Asn4196 carries an N-linked (GlcNAc...) asparagine glycan. Asn4267 carries an N-linked (GlcNAc...) asparagine glycan. The 56-residue stretch at 4273-4328 (CPPPFEFQSCGSPCAGLCATHLNHRLCQDLPPCQPGCYCPKGLLEQAGSCILPEQC) folds into the TIL 10 domain. Residues Asn4408 and Asn4463 are each glycosylated (N-linked (GlcNAc...) asparagine). The TSP type-1 24 domain occupies 4465-4516 (TCQWGPWGPWSPCQMPCSGGFKLRWRVARDTSAGECPGPWAQTESCNMGSCP). 3 cysteine pairs are disulfide-bonded: Cys4466–Cys4500, Cys4477–Cys4481, and Cys4510–Cys4515. The TIL 11 domain maps to 4530–4576 (DCANQCPRSCADLWDGVQCLQGPCSPGCRCPPGQLVQDGHCVPISSC). N-linked (GlcNAc...) asparagine glycosylation is found at Asn4584, Asn4601, and Asn4606. The TSP type-1 25 domain occupies 4616–4669 (CPVLGPWSAWSECSAVCGKGTMVRHRSCEEHPDREPCQALDLQQWQECNLQACP). Disulfide bonds link Cys4628–Cys4663, Cys4632–Cys4668, and Cys4643–Cys4652. The 55-residue stretch at 4671 to 4725 (CPPGQVLSTCATMCPSLCSHLWPGTICVREPCQLGCGCPGGQLLYNGTCIPPEAC) folds into the TIL 12 domain. N-linked (GlcNAc...) asparagine glycans are attached at residues Asn4716, Asn4756, Asn4799, and Asn4806. The 59-residue stretch at 4777–4835 (CAPGEIWQHGKLGPCEKTCPEMNMTQAWSNCTEAQAPGCVCQLGYFRSQTGLCVPEDHC) folds into the TIL 13 domain. Positions 4835-4893 (CECWHHGSPHLPGSEWQEACESCRCLHGKSVCIRHCPELSCAQGEVIMQEPGSCCPICQ) constitute a VWFC 3 domain. 4 cysteine pairs are disulfide-bonded: Cys4892-Cys4952, Cys4918-Cys4969, Cys4928-Cys4985, and Cys4932-Cys4987. The CTCK domain occupies 4892-4991 (CQQDTLKEEP…IHSCQCSACQ (100 aa)). An N-linked (GlcNAc...) asparagine glycan is attached at Asn4912.

This sequence belongs to the thrombospondin family. Subcommissural organ.

Its subcellular location is the secreted. The protein resides in the extracellular space. Its function is as follows. Involved in the modulation of neuronal aggregation. May be involved in developmental events during the formation of the central nervous system. This is SCO-spondin from Mus musculus (Mouse).